Consider the following 221-residue polypeptide: Serine/arginine-rich splicing factor 2 (221 aa).

The residue at position 2 (serine 2) is an N-acetylserine. Position 2 is a phosphoserine (serine 2). The 79-residue stretch at threonine 14–tyrosine 92 folds into the RRM domain. 2 positions are modified to phosphothreonine: threonine 22 and threonine 25. Position 26 is a phosphoserine (serine 26). N6-acetyllysine is present on lysine 52. The tract at residues tyrosine 92 to serine 221 is disordered. 2 stretches are compositionally biased toward basic residues: residues arginine 117 to serine 171 and serine 179 to serine 189. A phosphoserine mark is found at serine 189, serine 191, serine 204, serine 206, serine 208, serine 212, and serine 220.

Belongs to the splicing factor SR family. As to quaternary structure, in vitro, self-associates and binds SRSF1/SFRS1 (ASF/SF2), SNRNP70 and U2AF1 but not U2AF2. Binds SREK1/SFRS12. Interacts with CCNL1 and CCNL2. Interacts with SCAF11. Interacts with ZRSR2/U2AF1-RS2. Interacts with CCDC55 (via C-terminus). Interacts with BRDT. Post-translationally, extensively phosphorylated on serine residues in the RS domain. Phosphorylated by SRPK2 and this causes its redistribution from the nuclear speckle to nucleoplasm and controls cell fate decision in response to cisplatin treatment. KAT5/TIP60 inhibits its phosphorylation by preventing SRPK2 nuclear translocation. In terms of processing, acetylation on Lys-52 by KAT5/TIP60 promotes its proteasomal degradation. This effect is counterbalanced by HDAC6, which positively controls SRSF2 protein level by deacetylating it and preventing its proteasomal degradation.

It localises to the nucleus. It is found in the nucleoplasm. Its subcellular location is the nucleus speckle. In terms of biological role, necessary for the splicing of pre-mRNA. It is required for formation of the earliest ATP-dependent splicing complex and interacts with spliceosomal components bound to both the 5'- and 3'-splice sites during spliceosome assembly. It also is required for ATP-dependent interactions of both U1 and U2 snRNPs with pre-mRNA. Interacts with other spliceosomal components, via the RS domains, to form a bridge between the 5'- and 3'-splice site binding components, U1 snRNP and U2AF. Binds to purine-rich RNA sequences, either 5'-AGSAGAGTA-3' (S=C or G) or 5'-GTTCGAGTA-3'. Can bind to beta-globin mRNA and commit it to the splicing pathway. The phosphorylated form (by SRPK2) is required for cellular apoptosis in response to cisplatin treatment. In Sus scrofa (Pig), this protein is Serine/arginine-rich splicing factor 2 (SRSF2).